The chain runs to 476 residues: Cysteine--tRNA ligase (476 aa).

Residue Cys31 coordinates Zn(2+). Residues 33-43 (PTVYNYAHIGN) carry the 'HIGH' region motif. Residues Cys211, His236, and Glu240 each contribute to the Zn(2+) site. Residues 269-273 (KMSKS) carry the 'KMSKS' region motif. Lys272 provides a ligand contact to ATP.

This sequence belongs to the class-I aminoacyl-tRNA synthetase family. As to quaternary structure, monomer. Zn(2+) is required as a cofactor.

The protein localises to the cytoplasm. The catalysed reaction is tRNA(Cys) + L-cysteine + ATP = L-cysteinyl-tRNA(Cys) + AMP + diphosphate. The sequence is that of Cysteine--tRNA ligase from Xanthomonas euvesicatoria pv. vesicatoria (strain 85-10) (Xanthomonas campestris pv. vesicatoria).